Reading from the N-terminus, the 372-residue chain is Biglycan (372 aa).

A signal peptide spans 1-19 (MPTMWPLWLLASLLALSQA). Positions 20–40 (LPFEQKGFWDFTLDDGLPMLN) are excised as a propeptide. 2 O-linked (Xyl...) (glycosaminoglycan) serine glycosylation sites follow: Ser-45 and Ser-51. 2 cysteine pairs are disulfide-bonded: Cys-67-Cys-73 and Cys-71-Cys-80. 12 LRR repeats span residues 86-106 (KAVPKEISPDTTLLDLQNNEI), 107-130 (SELRKDDFKGLQHLYALVLVNNKI), 131-154 (SKIHEKAFSPLRKLQKLYISKNHL), 155-175 (VEIPPNLPSSLVELRIHDNRI), 176-199 (RKVPKGVFSGLRNMNCIEMGGNPL), 200-224 (ENSGFQPGAFDGLKLNYLRISEAKL), 225-245 (TGIPKDLPETLNELHLDHNKI), 246-269 (QAIELEDLLRYSKLYRLGLGHNQI), 270-293 (RMIENGSLSFLPTLRELHLDNNKL), 294-316 (SRVPAGLPDLKLLQVVYLHTNNI), 317-346 (TKVGVNDFCPVGFGVKRAYYNGISLFNNPV), and 347-372 (PYWEVQPATFRCVTDRLAIQFGNYKK). 2 N-linked (GlcNAc...) asparagine glycosylation sites follow: Asn-274 and Asn-315. Cys-325 and Cys-358 are oxidised to a cystine.

Belongs to the small leucine-rich proteoglycan (SLRP) family. SLRP class I subfamily. In terms of assembly, homodimer. Forms a ternary complex with MFAP2 and ELN. The two attached glycosaminoglycan chains can be either chondroitin sulfate or dermatan sulfate.

Its subcellular location is the secreted. It localises to the extracellular space. The protein localises to the extracellular matrix. Its function is as follows. May be involved in collagen fiber assembly. The polypeptide is Biglycan (BGN) (Equus caballus (Horse)).